We begin with the raw amino-acid sequence, 314 residues long: Malate dehydrogenase (314 aa).

Residues 11-16 and aspartate 35 contribute to the NAD(+) site; that span reads GSGNIG. Arginine 84 and arginine 90 together coordinate substrate. NAD(+)-binding positions include asparagine 97 and 120 to 122; that span reads ITN. 2 residues coordinate substrate: asparagine 122 and arginine 153. The Proton acceptor role is filled by histidine 177.

This sequence belongs to the LDH/MDH superfamily. MDH type 3 family.

The enzyme catalyses (S)-malate + NAD(+) = oxaloacetate + NADH + H(+). Functionally, catalyzes the reversible oxidation of malate to oxaloacetate. The protein is Malate dehydrogenase of Rickettsia typhi (strain ATCC VR-144 / Wilmington).